The following is a 338-amino-acid chain: Mitochondrial glutathione transporter SLC25A40 (338 aa).

3 Solcar repeats span residues 13–131, 139–223, and 233–327; these read VTPL…LSAL, NETC…LKKW, and PTFM…GKAF. The next 6 membrane-spanning stretches (helical) occupy residues 19-39, 103-123, 142-162, 199-220, 239-259, and 298-318; these read MLAS…LDVV, LWSG…IYFT, CIPI…ISPL, WAPT…YEIL, FTSG…FDVV, and GLFS…AIMI.

Belongs to the mitochondrial carrier (TC 2.A.29) family.

The protein resides in the mitochondrion inner membrane. The enzyme catalyses glutathione(in) = glutathione(out). Functionally, probable mitochondrial transporter required for glutathione import into mitochondria. Glutathione, which plays key roles in oxidative metabolism, is produced exclusively in the cytosol and is imported in many organelles. Mitochondrial glutathione is required for the activity and stability of proteins containing iron-sulfur clusters, as well as erythropoiesis. This Homo sapiens (Human) protein is Mitochondrial glutathione transporter SLC25A40.